A 271-amino-acid chain; its full sequence is S-adenosylmethionine decarboxylase proenzyme (271 aa).

Ser121 (schiff-base intermediate with substrate; via pyruvic acid) is an active-site residue. Ser121 is subject to Pyruvic acid (Ser); by autocatalysis. His126 functions as the Proton acceptor; for processing activity in the catalytic mechanism. The active-site Proton donor; for catalytic activity is Cys149.

Belongs to the prokaryotic AdoMetDC family. Type 2 subfamily. As to quaternary structure, heterooctamer of four alpha and four beta chains arranged as a tetramer of alpha/beta heterodimers. Requires pyruvate as cofactor. Is synthesized initially as an inactive proenzyme. Formation of the active enzyme involves a self-maturation process in which the active site pyruvoyl group is generated from an internal serine residue via an autocatalytic post-translational modification. Two non-identical subunits are generated from the proenzyme in this reaction, and the pyruvate is formed at the N-terminus of the alpha chain, which is derived from the carboxyl end of the proenzyme. The post-translation cleavage follows an unusual pathway, termed non-hydrolytic serinolysis, in which the side chain hydroxyl group of the serine supplies its oxygen atom to form the C-terminus of the beta chain, while the remainder of the serine residue undergoes an oxidative deamination to produce ammonia and the pyruvoyl group blocking the N-terminus of the alpha chain.

It catalyses the reaction S-adenosyl-L-methionine + H(+) = S-adenosyl 3-(methylsulfanyl)propylamine + CO2. The protein operates within amine and polyamine biosynthesis; S-adenosylmethioninamine biosynthesis; S-adenosylmethioninamine from S-adenosyl-L-methionine: step 1/1. Functionally, catalyzes the decarboxylation of S-adenosylmethionine to S-adenosylmethioninamine (dcAdoMet), the propylamine donor required for the synthesis of the polyamines spermine and spermidine from the diamine putrescine. This is S-adenosylmethionine decarboxylase proenzyme from Clostridium perfringens (strain ATCC 13124 / DSM 756 / JCM 1290 / NCIMB 6125 / NCTC 8237 / Type A).